Reading from the N-terminus, the 340-residue chain is UDP-N-acetylglucosamine--N-acetylmuramyl-(pentapeptide) pyrophosphoryl-undecaprenol N-acetylglucosamine transferase (340 aa).

UDP-N-acetyl-alpha-D-glucosamine contacts are provided by residues 15-17, Asn127, Ser184, Ile230, and Gln275; that span reads TGG.

The protein belongs to the glycosyltransferase 28 family. MurG subfamily.

It localises to the cell inner membrane. The catalysed reaction is di-trans,octa-cis-undecaprenyl diphospho-N-acetyl-alpha-D-muramoyl-L-alanyl-D-glutamyl-meso-2,6-diaminopimeloyl-D-alanyl-D-alanine + UDP-N-acetyl-alpha-D-glucosamine = di-trans,octa-cis-undecaprenyl diphospho-[N-acetyl-alpha-D-glucosaminyl-(1-&gt;4)]-N-acetyl-alpha-D-muramoyl-L-alanyl-D-glutamyl-meso-2,6-diaminopimeloyl-D-alanyl-D-alanine + UDP + H(+). It functions in the pathway cell wall biogenesis; peptidoglycan biosynthesis. Its function is as follows. Cell wall formation. Catalyzes the transfer of a GlcNAc subunit on undecaprenyl-pyrophosphoryl-MurNAc-pentapeptide (lipid intermediate I) to form undecaprenyl-pyrophosphoryl-MurNAc-(pentapeptide)GlcNAc (lipid intermediate II). In Vesicomyosocius okutanii subsp. Calyptogena okutanii (strain HA), this protein is UDP-N-acetylglucosamine--N-acetylmuramyl-(pentapeptide) pyrophosphoryl-undecaprenol N-acetylglucosamine transferase.